The chain runs to 303 residues: uncharacterized protein (303 aa).

4 consecutive transmembrane segments (helical) span residues 55–77 (FLVK…LFIQ), 92–111 (PAVF…TKII), 208–230 (FSLP…ATSL), and 240–257 (IPHI…KILI).

It is found in the cell membrane. This is an uncharacterized protein from Bacillus subtilis (strain 168).